Consider the following 124-residue polypeptide: Ribonuclease pancreatic (124 aa).

Positions 1–21 (AESSAMKFQRQHMDSDGHPDT) are disordered. Substrate contacts are provided by K7 and R10. Residue H12 is the Proton acceptor of the active site. 4 cysteine pairs are disulfide-bonded: C26–C84, C40–C95, C58–C110, and C65–C72. Substrate is bound by residues 41 to 45 (KPVNT), K66, and R85. H119 serves as the catalytic Proton donor.

This sequence belongs to the pancreatic ribonuclease family. Monomer. Interacts with and forms tight 1:1 complexes with RNH1. Dimerization of two such complexes may occur. Interaction with RNH1 inhibits this protein. Pancreas.

It localises to the secreted. The enzyme catalyses an [RNA] containing cytidine + H2O = an [RNA]-3'-cytidine-3'-phosphate + a 5'-hydroxy-ribonucleotide-3'-[RNA].. It catalyses the reaction an [RNA] containing uridine + H2O = an [RNA]-3'-uridine-3'-phosphate + a 5'-hydroxy-ribonucleotide-3'-[RNA].. In terms of biological role, endonuclease that catalyzes the cleavage of RNA on the 3' side of pyrimidine nucleotides. Acts on single-stranded and double-stranded RNA. This is Ribonuclease pancreatic (RNASE1) from Galea musteloides (Common yellow-toothed cavy).